A 178-amino-acid polypeptide reads, in one-letter code: MVSVPTAWCSVALALLVALHEGKDQAAATLEQPASSPRARAAHLRLRRCSCSSWLDKECVYFCHLDIIWVNTPGQTAPYGLGNPPRRRRRSLPGRCECSSARDPACATFCHQRSRADAVGVPGSQSSADAFQAGKTWATPGELLRTLRDISAAKTHFAKRQQEATREPRTTHSRHRKR.

The signal sequence occupies residues 1-24 (MVSVPTAWCSVALALLVALHEGKD). The propeptide occupies 25–46 (QAAATLEQPASSPRARAAHLRL). 2 cysteine pairs are disulfide-bonded: Cys49/Cys63 and Cys51/Cys59. The propeptide occupies 70–178 (VNTPGQTAPY…RTTHSRHRKR (109 aa)). The tract at residues 96–111 (CECSSARDPACATFCH) is endothelin-like. The segment at 154-178 (KTHFAKRQQEATREPRTTHSRHRKR) is disordered. Basic and acidic residues predominate over residues 160–170 (RQQEATREPRT).

The protein belongs to the endothelin/sarafotoxin family.

The protein localises to the secreted. Endothelins are endothelium-derived vasoconstrictor peptides. The sequence is that of Endothelin-2 (EDN2) from Oryctolagus cuniculus (Rabbit).